The primary structure comprises 93 residues: Cobalt transport protein CbiN (93 aa).

Transmembrane regions (helical) follow at residues 5–25 (LMLLAMVVALVILPFFINHGG) and 63–83 (LLFTLQGSLGAAVIFYILGYC).

This sequence belongs to the CbiN family. In terms of assembly, forms an energy-coupling factor (ECF) transporter complex composed of an ATP-binding protein (A component, CbiO), a transmembrane protein (T component, CbiQ) and 2 possible substrate-capture proteins (S components, CbiM and CbiN) of unknown stoichimetry.

Its subcellular location is the cell inner membrane. Its pathway is cofactor biosynthesis; adenosylcobalamin biosynthesis. In terms of biological role, part of the energy-coupling factor (ECF) transporter complex CbiMNOQ involved in cobalt import. The polypeptide is Cobalt transport protein CbiN (Salmonella gallinarum (strain 287/91 / NCTC 13346)).